The primary structure comprises 576 residues: MRTNFCGTLNVSHVGKTIKLCGWVNKFRNLKEILFIDIRDQTGIIQVLFSKKSELLFKKAADLRNEFCIQVLGIVQERITKNKNYTMSTGEIEIFALELKIFNKSQPLPIDLKSCNIEETRLKFRYLDLRHPNMIRNIIIRNDITIIIRNFMKKNKFLDIETPILTKSTPEGARDYIVPSRIHKNKYYALPQSPQLFKQLLMISGIDRYYQIAKCFRDEDLRSDRQPEFTQIDIEVSFLNAKKVRKIIERMITSVWNKIINVHLKKFQKLSFYDAIKMYGTDKPDLRNPIQLIDVTNIIHVKNNINAITLPNKKTQQNIVIAMCIPRGMSLNINYINSYHHLVQKYTKNKLFNVEVLNHCPIKEQKKTSFHKKPSSDLTFQLISKTSAKHGDMIFYLSEKSPLVYEIMGKLRIELGKDLNLIDYNSWKPLWITNFPLFKKNELNQYISTHHPFTAPKYMKIDTSITNYEEIVADSYDLVINGYEIGSGSVRIHDLELQKTVFNILGINTVLQKNNFNFFLNALKYGTPPHAGIALGLDRITMLLTNSHNLRDVIAFPKTTTGSCLTTGAPSKIIHF.

Glutamate 171 lines the L-aspartate pocket. The interval 195-198 is aspartate; sequence QLFK. Arginine 217 lines the L-aspartate pocket. ATP-binding positions include 217-219 and glutamine 226; that span reads RDE. Histidine 450 contacts L-aspartate. Glutamate 484 is an ATP binding site. An L-aspartate-binding site is contributed by arginine 491. 536-539 serves as a coordination point for ATP; it reads GLDR.

It belongs to the class-II aminoacyl-tRNA synthetase family. Type 1 subfamily. In terms of assembly, homodimer.

It is found in the cytoplasm. It carries out the reaction tRNA(Asp) + L-aspartate + ATP = L-aspartyl-tRNA(Asp) + AMP + diphosphate. Functionally, catalyzes the attachment of L-aspartate to tRNA(Asp) in a two-step reaction: L-aspartate is first activated by ATP to form Asp-AMP and then transferred to the acceptor end of tRNA(Asp). The polypeptide is Aspartate--tRNA ligase (Buchnera aphidicola subsp. Baizongia pistaciae (strain Bp)).